Consider the following 150-residue polypeptide: Large ribosomal subunit protein bL9 (150 aa).

Belongs to the bacterial ribosomal protein bL9 family.

Its function is as follows. Binds to the 23S rRNA. The sequence is that of Large ribosomal subunit protein bL9 from Limosilactobacillus fermentum (strain NBRC 3956 / LMG 18251) (Lactobacillus fermentum).